Here is a 22-residue protein sequence, read N- to C-terminus: MICOS complex subunit MIC60 (22 aa).

It belongs to the MICOS complex subunit Mic60 family. Component of the mitochondrial contact site and cristae organizing system (MICOS) complex, composed of at least MICOS10/MIC10, CHCHD3/MIC19, CHCHD6/MIC25, APOOL/MIC27, IMMT/MIC60, APOO/MIC23/MIC26 and MICOS13/MIC13. This complex was also known under the names MINOS or MitOS complex. The MICOS complex associates with mitochondrial outer membrane proteins SAMM50, MTX1 and MTX2 (together described as components of the mitochondrial outer membrane sorting assembly machinery (SAM) complex) and DNAJC11, mitochondrial inner membrane protein TMEM11 and with HSPA9. The MICOS and SAM complexes together with DNAJC11 are part of a large protein complex spanning both membranes termed the mitochondrial intermembrane space bridging (MIB) complex. Interacts with HSPA1A/HSPA1B and OPA1, preferentially with the soluble OPA1 form. Interacts with MICOS13/MIC13, MICOS10/MIC10, CHCHD3/MIC19, CHCHD6/MIC25, SAMM50 and TMEM11. Interacts with APOO/MIC23/MIC26 and APOOL/MIC27. Interacts with ARMC1. Interacts with ARMC12.

The protein localises to the mitochondrion inner membrane. Its subcellular location is the mitochondrion. In terms of biological role, component of the MICOS complex, a large protein complex of the mitochondrial inner membrane that plays crucial roles in the maintenance of crista junctions, inner membrane architecture, and formation of contact sites to the outer membrane. Plays an important role in the maintenance of the MICOS complex stability and the mitochondrial cristae morphology. The protein is MICOS complex subunit MIC60 of Mesocricetus auratus (Golden hamster).